The chain runs to 411 residues: Peptidase T (411 aa).

Zn(2+) is bound at residue His-78. Residue Asp-80 is part of the active site. Asp-140 is a Zn(2+) binding site. The active-site Proton acceptor is the Glu-173. Residues Glu-174, Asp-196, and His-379 each contribute to the Zn(2+) site.

It belongs to the peptidase M20B family. Zn(2+) serves as cofactor.

Its subcellular location is the cytoplasm. The enzyme catalyses Release of the N-terminal residue from a tripeptide.. Its function is as follows. Cleaves the N-terminal amino acid of tripeptides. This Yersinia pestis bv. Antiqua (strain Antiqua) protein is Peptidase T.